The following is a 281-amino-acid chain: Probable endonuclease 4 (281 aa).

Zn(2+) contacts are provided by His-70, His-110, Glu-146, Asp-180, His-183, His-217, Asp-230, His-232, and Glu-262.

It belongs to the AP endonuclease 2 family. Zn(2+) serves as cofactor.

It carries out the reaction Endonucleolytic cleavage to 5'-phosphooligonucleotide end-products.. Functionally, endonuclease IV plays a role in DNA repair. It cleaves phosphodiester bonds at apurinic or apyrimidinic (AP) sites, generating a 3'-hydroxyl group and a 5'-terminal sugar phosphate. This is Probable endonuclease 4 from Nitratiruptor sp. (strain SB155-2).